The chain runs to 139 residues: Thyrotropin subunit beta (139 aa).

Residues Met-1–Pro-20 form the signal peptide. Disulfide bonds link Cys-22–Cys-72, Cys-36–Cys-87, Cys-39–Cys-127, Cys-47–Cys-103, Cys-51–Cys-105, and Cys-108–Cys-115. Asn-43 carries N-linked (GlcNAc...) asparagine glycosylation.

It belongs to the glycoprotein hormones subunit beta family. As to quaternary structure, heterodimer of a common alpha chain and a unique beta chain which confers biological specificity to thyrotropin, lutropin, follitropin and gonadotropin.

The protein resides in the secreted. Indispensable for the control of thyroid structure and metabolism. May play some role in the biological processes of the immature fishes. The sequence is that of Thyrotropin subunit beta (tshb) from Salmo salar (Atlantic salmon).